The chain runs to 119 residues: Protein FATTY ACID EXPORT 5 (119 aa).

3 helical membrane passes run 27 to 47 (SIAS…AGFI), 57 to 77 (TSLL…FVMG), and 85 to 105 (KIMP…FYVY).

This sequence belongs to the TMEM14 family.

The protein resides in the membrane. Functionally, may be involved in free fatty acids export. This chain is Protein FATTY ACID EXPORT 5, found in Arabidopsis thaliana (Mouse-ear cress).